Consider the following 643-residue polypeptide: 1-deoxy-D-xylulose-5-phosphate synthase (643 aa).

Residues H78 and 119 to 121 (AHS) each bind thiamine diphosphate. D150 lines the Mg(2+) pocket. Thiamine diphosphate is bound by residues 151 to 152 (GS), N179, Y288, and E370. A Mg(2+)-binding site is contributed by N179.

This sequence belongs to the transketolase family. DXPS subfamily. Homodimer. Mg(2+) is required as a cofactor. It depends on thiamine diphosphate as a cofactor.

It carries out the reaction D-glyceraldehyde 3-phosphate + pyruvate + H(+) = 1-deoxy-D-xylulose 5-phosphate + CO2. It participates in metabolic intermediate biosynthesis; 1-deoxy-D-xylulose 5-phosphate biosynthesis; 1-deoxy-D-xylulose 5-phosphate from D-glyceraldehyde 3-phosphate and pyruvate: step 1/1. Functionally, catalyzes the acyloin condensation reaction between C atoms 2 and 3 of pyruvate and glyceraldehyde 3-phosphate to yield 1-deoxy-D-xylulose-5-phosphate (DXP). In Brucella ovis (strain ATCC 25840 / 63/290 / NCTC 10512), this protein is 1-deoxy-D-xylulose-5-phosphate synthase.